A 335-amino-acid polypeptide reads, in one-letter code: MTAPSKPVLVADIGGTNARFALADIDASVPLLDDTCREFAVVEFGSLGEAARYYLDQIGVQATKGVFAVAGRVDGDEARITNHPWVISRSRTATMLGFSTLHLINDFAAQAMAISLLRPQDVVQVGGASWRPAPIEQPRNYGVIGPGTGLGVGGLIIRNGRCFPLETEGGHVSFPPGTPEEIRVLEILSEQFGRVSNERLICGPGLVNIHRALSEIAGIDPGPLEPKDITARAAAGDPRASRTIDLFCAIFGAIAGDMVLMQGAWDGVFLTGGLVPKVLDSLQHSGFRQRFEHKGRFSAIMSRVPSLAVMHPHAGLLGAAAYAVDAERALPGEQR.

11-16 (ADIGGT) lines the ATP pocket.

This sequence belongs to the bacterial glucokinase family.

The protein localises to the cytoplasm. The catalysed reaction is D-glucose + ATP = D-glucose 6-phosphate + ADP + H(+). The chain is Glucokinase from Xanthomonas campestris pv. campestris (strain B100).